We begin with the raw amino-acid sequence, 90 residues long: MSRTVFCARLKKEGEGLDFQLYPGELGKRIFDNISKEAWAQWQHKQTMLINEKKLNMMDPEHRKQLETEMVNFLFEGKDVHIEGYTPPSE.

The protein belongs to the Fe(2+)-trafficking protein family.

In terms of biological role, could be a mediator in iron transactions between iron acquisition and iron-requiring processes, such as synthesis and/or repair of Fe-S clusters in biosynthetic enzymes. The polypeptide is Probable Fe(2+)-trafficking protein (Vibrio campbellii (strain ATCC BAA-1116)).